The following is a 686-amino-acid chain: MEKKAKPGFWDKKILGTAVKGAFIKLNPVYMVKNPVMFVVEIGAIISLALCFFPNLFGGNNQDMILYNSLVFIILLLTLLFANFSESVAEGRGKAQAASLKQTQQDMQARLILNGKEKVVNANTLKKGDIVLVNMGEVIPSDGEIIEGVASVDESAITGESAPVLKESGGDFASVTGGTTVASDYLKIQITSNPGESFIDKMIQLVEGASRKKTPNEIALSTLLVSLTIIFLIVIVSLYPMAIYTGIKLPVSTLVALTVCLIPTTIGGLLSAIGIAGMDRVTRFNVIALSGKAVEACGDVDTMILDKTGTITYGNRMASEFIALDKGNKNYLIHYAILASIQDNTPEGKSIVTLGKDLLKEDLDTNDIRENQFIEFTAQTRMSGVDLADGTRIRKGAYDAIIKYIKNIGGEIPHDLEDKVNNISKLGGTPLVVCAEEKIYGVIYLKDTIKPGLVERFERLRSIGIKTIMCTGDNPLTAATIAHEAGVDSFIAECKPEDKIKVIKDAQSKSKVVAMTGDGTNDAPALAQADVGIAMNSGTTAAKEAANMVDLDSDPTKILDVVEIGKQLLITRGALTTFSIANDIAKYFAIIPAMFLAIIPQMQVLNIMHLSSSYSAILSALIFNAIIIPCLIPLAMKGVKYKLQRSEKMLAHNMLVYGVGGMIVPFIGIKLIDLVIAPLLTMMGLG.

4 consecutive transmembrane segments (helical) span residues 37-57 (MFVVEIGAIISLALCFFPNLF), 64-84 (MILYNSLVFIILLLTLLFANF), 223-243 (LLVSLTIIFLIVIVSLYPMAI), and 255-275 (VALTVCLIPTTIGGLLSAIGI). Asp306 acts as the 4-aspartylphosphate intermediate in catalysis. ATP-binding positions include Asp343, Glu347, 376-383 (FTAQTRMS), and Lys395. Asp518 and Asp522 together coordinate Mg(2+). The next 3 helical transmembrane spans lie at 588 to 608 (FAIIPAMFLAIIPQMQVLNIM), 616 to 636 (AILSALIFNAIIIPCLIPLAM), and 656 to 676 (VYGVGGMIVPFIGIKLIDLVI).

The protein belongs to the cation transport ATPase (P-type) (TC 3.A.3) family. Type IA subfamily. As to quaternary structure, the system is composed of three essential subunits: KdpA, KdpB and KdpC.

Its subcellular location is the cell membrane. The catalysed reaction is K(+)(out) + ATP + H2O = K(+)(in) + ADP + phosphate + H(+). Functionally, part of the high-affinity ATP-driven potassium transport (or Kdp) system, which catalyzes the hydrolysis of ATP coupled with the electrogenic transport of potassium into the cytoplasm. This subunit is responsible for energy coupling to the transport system and for the release of the potassium ions to the cytoplasm. This is Potassium-transporting ATPase ATP-binding subunit 2 from Listeria innocua serovar 6a (strain ATCC BAA-680 / CLIP 11262).